The primary structure comprises 82 residues: MPSPEMEARLKQIVAEQLGVDESKIVPTARFTEDLNADSLDLVEMIMELEEAFGVEIPDEDAEKIITVQDALNYIEQKLQAA.

Positions 4 to 79 (PEMEARLKQI…DALNYIEQKL (76 aa)) constitute a Carrier domain. An O-(pantetheine 4'-phosphoryl)serine modification is found at S39.

The protein belongs to the acyl carrier protein (ACP) family. Post-translationally, 4'-phosphopantetheine is transferred from CoA to a specific serine of apo-ACP by AcpS. This modification is essential for activity because fatty acids are bound in thioester linkage to the sulfhydryl of the prosthetic group.

It localises to the cytoplasm. The protein operates within lipid metabolism; fatty acid biosynthesis. Its function is as follows. Carrier of the growing fatty acid chain in fatty acid biosynthesis. The protein is Acyl carrier protein of Roseiflexus castenholzii (strain DSM 13941 / HLO8).